Here is a 344-residue protein sequence, read N- to C-terminus: Peroxidase 36 (344 aa).

The first 28 residues, 1-28, serve as a signal peptide directing secretion; sequence MNTKTVKSMAGIVLSQISLVALFPLCIC. Intrachain disulfides connect Cys-50/Cys-130, Cys-83/Cys-88, Cys-136/Cys-337, and Cys-215/Cys-247. His-81 serves as the catalytic Proton acceptor. Ca(2+) is bound by residues Asp-82, Val-85, Gly-87, Asp-89, and Ser-91. Pro-178 provides a ligand contact to substrate. His-208 is a binding site for heme b. Thr-209 is a Ca(2+) binding site. Asn-224 is a glycosylation site (N-linked (GlcNAc...) asparagine). Asp-260, Thr-263, and Asp-268 together coordinate Ca(2+).

This sequence belongs to the peroxidase family. Classical plant (class III) peroxidase subfamily. Heme b serves as cofactor. Requires Ca(2+) as cofactor.

It localises to the secreted. It carries out the reaction 2 a phenolic donor + H2O2 = 2 a phenolic radical donor + 2 H2O. In terms of biological role, removal of H(2)O(2), oxidation of toxic reductants, biosynthesis and degradation of lignin, suberization, auxin catabolism, response to environmental stresses such as wounding, pathogen attack and oxidative stress. These functions might be dependent on each isozyme/isoform in each plant tissue. This chain is Peroxidase 36 (PER36), found in Arabidopsis thaliana (Mouse-ear cress).